Consider the following 105-residue polypeptide: Extracellular guanyl-specific ribonuclease Fl1 (105 aa).

2 disulfides stabilise this stretch: Cys-5/Cys-101 and Cys-23/Cys-82. His-39 is an active-site residue. Glu-57 (proton acceptor) is an active-site residue. The active-site Proton donor is His-90.

This sequence belongs to the ribonuclease N1/T1 family.

It carries out the reaction [RNA] containing guanosine + H2O = an [RNA fragment]-3'-guanosine-3'-phosphate + a 5'-hydroxy-ribonucleotide-3'-[RNA fragment].. This Gibberella baccata (Fusarium lateritium) protein is Extracellular guanyl-specific ribonuclease Fl1.